We begin with the raw amino-acid sequence, 77 residues long: U11-lycotoxin-Ls1d (77 aa).

A signal peptide spans 1-20 (MKLIIFTGLVLFAIVSLIEA). A propeptide spanning residues 21–26 (EEESGR) is cleaved from the precursor.

It belongs to the neurotoxin 19 (CSTX) family. 10 (U11-Lctx) subfamily. Post-translationally, contains 4 disulfide bonds. As to expression, expressed by the venom gland.

The protein resides in the secreted. The polypeptide is U11-lycotoxin-Ls1d (Lycosa singoriensis (Wolf spider)).